The chain runs to 159 residues: uncharacterized protein (159 aa).

It belongs to the SufE family.

This is an uncharacterized protein from Synechocystis sp. (strain ATCC 27184 / PCC 6803 / Kazusa).